The sequence spans 186 residues: MAFRPSRLAIFIDGNNMFYAQQKNGWFFDPRRVLNYFANRPEIELVNAYWYTGLKDPQDQRGFRDALVSLGYTVRTKMLKEFHDESNGNRYFQRANLDIEIVIDMFNTVEQYDEIVLFSGDGDFERAIELLRAKQTHITVVSTDGMIARELRNATDRYIDLNDIRSFIEKTERPEPFVSAPVIAPA.

In terms of biological role, functions in an output pathway of the circadian clock. One of three clock output pathways. Involved in negative feedback regulation of KaiC; deletion leads to overexpression of KaiC protein and decreases the amplitude of the circadian response. Overexpression reduces the expression of circadian genes. In Synechococcus elongatus (strain ATCC 33912 / PCC 7942 / FACHB-805) (Anacystis nidulans R2), this protein is Low amplitude and bright protein LabA.